The chain runs to 332 residues: Anthranilate phosphoribosyltransferase (332 aa).

5-phospho-alpha-D-ribose 1-diphosphate contacts are provided by residues Gly78, 81-82 (GD), Ser86, 88-91 (NIST), 106-114 (KHGNKSITS), and Ser118. Gly78 is a binding site for anthranilate. A Mg(2+)-binding site is contributed by Ser90. Anthranilate is bound at residue Asn109. Arg163 is a binding site for anthranilate. Residues Asp222 and Glu223 each coordinate Mg(2+).

This sequence belongs to the anthranilate phosphoribosyltransferase family. In terms of assembly, homodimer. It depends on Mg(2+) as a cofactor.

The enzyme catalyses N-(5-phospho-beta-D-ribosyl)anthranilate + diphosphate = 5-phospho-alpha-D-ribose 1-diphosphate + anthranilate. It functions in the pathway amino-acid biosynthesis; L-tryptophan biosynthesis; L-tryptophan from chorismate: step 2/5. In terms of biological role, catalyzes the transfer of the phosphoribosyl group of 5-phosphorylribose-1-pyrophosphate (PRPP) to anthranilate to yield N-(5'-phosphoribosyl)-anthranilate (PRA). In Staphylococcus aureus (strain USA300), this protein is Anthranilate phosphoribosyltransferase.